The primary structure comprises 407 residues: Na(+)-translocating NADH-quinone reductase subunit F (407 aa).

The helical transmembrane segment at 3–23 (ITLGIAMFTVIVLALAVIILF) threads the bilayer. One can recognise a 2Fe-2S ferredoxin-type domain in the interval 32-126 (GDITIEINDD…SMKVELPEEV (95 aa)). [2Fe-2S] cluster contacts are provided by Cys69, Cys75, Cys78, and Cys110. Residues 129–269 (VKKWECTVIS…SGPFGEFFAK (141 aa)) form the FAD-binding FR-type domain. Residues 272–389 (DAEMVFVGGG…PIMNASVIKM (118 aa)) are catalytic.

It belongs to the NqrF family. Composed of six subunits; NqrA, NqrB, NqrC, NqrD, NqrE and NqrF. It depends on [2Fe-2S] cluster as a cofactor. FAD serves as cofactor.

It localises to the cell inner membrane. The enzyme catalyses a ubiquinone + n Na(+)(in) + NADH + H(+) = a ubiquinol + n Na(+)(out) + NAD(+). In terms of biological role, NQR complex catalyzes the reduction of ubiquinone-1 to ubiquinol by two successive reactions, coupled with the transport of Na(+) ions from the cytoplasm to the periplasm. The first step is catalyzed by NqrF, which accepts electrons from NADH and reduces ubiquinone-1 to ubisemiquinone by a one-electron transfer pathway. This is Na(+)-translocating NADH-quinone reductase subunit F from Pasteurella multocida (strain Pm70).